A 104-amino-acid chain; its full sequence is Large ribosomal subunit protein uL24 (104 aa).

This sequence belongs to the universal ribosomal protein uL24 family. In terms of assembly, part of the 50S ribosomal subunit.

One of two assembly initiator proteins, it binds directly to the 5'-end of the 23S rRNA, where it nucleates assembly of the 50S subunit. In terms of biological role, one of the proteins that surrounds the polypeptide exit tunnel on the outside of the subunit. In Chromobacterium violaceum (strain ATCC 12472 / DSM 30191 / JCM 1249 / CCUG 213 / NBRC 12614 / NCIMB 9131 / NCTC 9757 / MK), this protein is Large ribosomal subunit protein uL24.